Here is a 565-residue protein sequence, read N- to C-terminus: Protein unc-87 (565 aa).

A compositionally biased stretch (low complexity) spans 1-27 (MLSFNNTTSASSFQSASSRYLMSSSSS). Disordered stretches follow at residues 1–83 (MLSF…TTNS) and 237–262 (IPSQ…RNTN). The segment covering 54–69 (EALERLRPNTASRERN) has biased composition (basic and acidic residues). Calponin-like repeat units lie at residues 237–262 (IPSQ…RNTN), 285–310 (VRLQ…RDVC), and 338–363 (VRLQ…RRET). Polar residues predominate over residues 250–262 (KLMTNFGTPRNTN). Residues 369–381 (SKHPEYDHEKPDQ) are compositionally biased toward basic and acidic residues. A disordered region spans residues 369 to 400 (SKHPEYDHEKPDQSEIPLQSGTNKFASQKGMT). Residues 384-398 (IPLQSGTNKFASQKG) show a composition bias toward polar residues. Calponin-like repeat units follow at residues 384 to 409 (IPLQ…RRET), 431 to 456 (IPSQ…RWEV), 472 to 497 (VRLQ…RNTT), and 517 to 542 (IPSQ…RDVK).

It belongs to the calponin family. In terms of assembly, monomer. Interacts with F-actin. Interacts with myosin. In terms of tissue distribution, expressed in the body wall muscles. Isoform a: Expression in the pharynx, anal depressor muscle, uterine muscle, vulva and unidentified neurons in the head and the ventral region. Isoform b: Expression in the body wall muscles, spermatheca, vulva and in the myoepithelial sheath.

It is found in the cytoplasm. It localises to the myofibril. Its subcellular location is the sarcomere. The protein resides in the i band. Thin filament-associated protein that is implicated in actin bundling and actin filament dynamics. Exhibits F-actin cross-linking activity. Required for the maintenance of sarcomeric actin organization in striated muscles. Competes with unc-60 isoform b for actin binding and protects actin filaments from depolymerization by unc-60, thereby contributing to actin filament stability. Cooperates with myosin to form actomyosin bundles and inhibits actomyosin ATPase activity and actomyosin motility. Might protect the myofilaments from mechanical stress. Functionally, acts as a negative regulator of myosin-dependent contractility of smooth muscle-like cells in the somatic gonad. In Caenorhabditis elegans, this protein is Protein unc-87 (unc-87).